The primary structure comprises 239 residues: Ribonuclease 3 (239 aa).

Residues 11–133 (HTAIQKKLGY…MFAAVSFDAD (123 aa)) enclose the RNase III domain. Glutamate 46 lines the Mg(2+) pocket. Residue aspartate 50 is part of the active site. Mg(2+)-binding residues include aspartate 119 and glutamate 122. Residue glutamate 122 is part of the active site. A DRBM domain is found at 160-230 (DGKTALQEAL…AKEALKWLEE (71 aa)).

The protein belongs to the ribonuclease III family. As to quaternary structure, homodimer. The cofactor is Mg(2+).

The protein resides in the cytoplasm. The enzyme catalyses Endonucleolytic cleavage to 5'-phosphomonoester.. Digests double-stranded RNA. Involved in the processing of primary rRNA transcript to yield the immediate precursors to the large and small rRNAs (23S and 16S). Processes some mRNAs, and tRNAs when they are encoded in the rRNA operon. Processes pre-crRNA and tracrRNA of type II CRISPR loci if present in the organism. This Neisseria gonorrhoeae (strain ATCC 700825 / FA 1090) protein is Ribonuclease 3.